Consider the following 401-residue polypeptide: Probable N-acetyl-gamma-glutamyl-phosphate reductase, chloroplastic (401 aa).

Residues 1 to 48 constitute a chloroplast transit peptide; the sequence is MSTASAFSSIQGCWFKGERKIRVADKRAKRLTLGSHVASPSSMSFRVS. Cysteine 205 is a catalytic residue.

It belongs to the NAGSA dehydrogenase family. Type 1 subfamily. As to quaternary structure, homotetramer.

The protein resides in the plastid. The protein localises to the chloroplast. The catalysed reaction is N-acetyl-L-glutamate 5-semialdehyde + phosphate + NADP(+) = N-acetyl-L-glutamyl 5-phosphate + NADPH + H(+). It participates in amino-acid biosynthesis; L-arginine biosynthesis; N(2)-acetyl-L-ornithine from L-glutamate: step 3/4. This is Probable N-acetyl-gamma-glutamyl-phosphate reductase, chloroplastic from Arabidopsis thaliana (Mouse-ear cress).